Here is an 872-residue protein sequence, read N- to C-terminus: Alanine--tRNA ligase (872 aa).

Positions 567, 571, 669, and 673 each coordinate Zn(2+).

This sequence belongs to the class-II aminoacyl-tRNA synthetase family. Requires Zn(2+) as cofactor.

It localises to the cytoplasm. The catalysed reaction is tRNA(Ala) + L-alanine + ATP = L-alanyl-tRNA(Ala) + AMP + diphosphate. Catalyzes the attachment of alanine to tRNA(Ala) in a two-step reaction: alanine is first activated by ATP to form Ala-AMP and then transferred to the acceptor end of tRNA(Ala). Also edits incorrectly charged Ser-tRNA(Ala) and Gly-tRNA(Ala) via its editing domain. The sequence is that of Alanine--tRNA ligase from Streptococcus pyogenes serotype M18 (strain MGAS8232).